The primary structure comprises 366 residues: Succinyl-diaminopimelate desuccinylase (366 aa).

His-66 lines the Zn(2+) pocket. Residue Asp-68 is part of the active site. Zn(2+) is bound at residue Asp-97. Glu-127 acts as the Proton acceptor in catalysis. Residues Glu-128, Glu-156, and His-341 each coordinate Zn(2+).

It belongs to the peptidase M20A family. DapE subfamily. Homodimer. The cofactor is Zn(2+). It depends on Co(2+) as a cofactor.

It carries out the reaction N-succinyl-(2S,6S)-2,6-diaminopimelate + H2O = (2S,6S)-2,6-diaminopimelate + succinate. The protein operates within amino-acid biosynthesis; L-lysine biosynthesis via DAP pathway; LL-2,6-diaminopimelate from (S)-tetrahydrodipicolinate (succinylase route): step 3/3. Functionally, catalyzes the hydrolysis of N-succinyl-L,L-diaminopimelic acid (SDAP), forming succinate and LL-2,6-diaminopimelate (DAP), an intermediate involved in the bacterial biosynthesis of lysine and meso-diaminopimelic acid, an essential component of bacterial cell walls. The chain is Succinyl-diaminopimelate desuccinylase from Aliarcobacter butzleri (strain RM4018) (Arcobacter butzleri).